The primary structure comprises 364 residues: SVP1-like protein 2 (364 aa).

WD repeat units follow at residues 173 to 213 (AHDS…KICE) and 218 to 257 (YQHT…NTIR).

It belongs to the WD repeat PROPPIN family.

The protein localises to the vacuole membrane. It localises to the cytoplasmic vesicle membrane. Its subcellular location is the preautophagosomal structure membrane. Involved in mitochondrial or peroxisomal functions and amino acid signaling pathways. The polypeptide is SVP1-like protein 2 (hsv2) (Schizosaccharomyces pombe (strain 972 / ATCC 24843) (Fission yeast)).